The sequence spans 310 residues: tRNA pseudouridine synthase B (310 aa).

The active-site Nucleophile is D47.

Belongs to the pseudouridine synthase TruB family. Type 1 subfamily.

It carries out the reaction uridine(55) in tRNA = pseudouridine(55) in tRNA. Responsible for synthesis of pseudouridine from uracil-55 in the psi GC loop of transfer RNAs. This Psychromonas ingrahamii (strain DSM 17664 / CCUG 51855 / 37) protein is tRNA pseudouridine synthase B.